The sequence spans 176 residues: NAD(P)H-quinone oxidoreductase subunit 6, chloroplastic (176 aa).

Helical transmembrane passes span 10–30, 32–52, 63–83, 92–112, and 152–172; these read FLLV…VLLT, PIFS…FYIL, LLIY…FMNS, LWTV…VSLV, and FFLP…GTIV.

The protein belongs to the complex I subunit 6 family. NDH is composed of at least 16 different subunits, 5 of which are encoded in the nucleus.

The protein localises to the plastid. Its subcellular location is the chloroplast thylakoid membrane. It catalyses the reaction a plastoquinone + NADH + (n+1) H(+)(in) = a plastoquinol + NAD(+) + n H(+)(out). It carries out the reaction a plastoquinone + NADPH + (n+1) H(+)(in) = a plastoquinol + NADP(+) + n H(+)(out). NDH shuttles electrons from NAD(P)H:plastoquinone, via FMN and iron-sulfur (Fe-S) centers, to quinones in the photosynthetic chain and possibly in a chloroplast respiratory chain. The immediate electron acceptor for the enzyme in this species is believed to be plastoquinone. Couples the redox reaction to proton translocation, and thus conserves the redox energy in a proton gradient. The sequence is that of NAD(P)H-quinone oxidoreductase subunit 6, chloroplastic (ndhG) from Cicer arietinum (Chickpea).